Here is a 176-residue protein sequence, read N- to C-terminus: Prepronociceptin (176 aa).

Positions 1 to 19 (MKILFCDLLLLSLFSSVSS) are cleaved as a signal peptide. 2 consecutive propeptides follow at residues 20 to 95 (SCQK…MQHL) and 169 to 176 (TLHQNGNA).

Belongs to the opioid neuropeptide precursor family. In terms of processing, specific enzymatic cleavages at paired basic residues probably yield other active peptides besides nociceptin. The N-terminal domain contains 6 conserved cysteines thought to be involved in disulfide bonding and/or processing.

It localises to the secreted. Functionally, ligand of the opioid receptor-like receptor OPRL1. It may act as a transmitter in the brain by modulating nociceptive and locomotor behavior. May be involved in neuronal differentiation and development. In terms of biological role, blocks nociceptin action in pain transmission by inhibiting nociceptin-induced hyperalgesia and allodynia. Its function is as follows. Has potent analgesic activity. This is Prepronociceptin (PNOC) from Bos taurus (Bovine).